The following is a 550-amino-acid chain: Pectinesterase 2.2 (550 aa).

Residue Asn-179 is glycosylated (N-linked (GlcNAc...) asparagine). Substrate contacts are provided by Thr-312 and Gln-342. The cysteines at positions 331 and 358 are disulfide-linked. The active-site Proton donor is Asp-365. Asp-386 serves as the catalytic Nucleophile. Cys-399 and Cys-433 are joined by a disulfide. 2 residues coordinate substrate: Arg-454 and Trp-456.

It in the N-terminal section; belongs to the PMEI family. This sequence in the C-terminal section; belongs to the pectinesterase family.

It localises to the secreted. The protein localises to the cell wall. It carries out the reaction [(1-&gt;4)-alpha-D-galacturonosyl methyl ester](n) + n H2O = [(1-&gt;4)-alpha-D-galacturonosyl](n) + n methanol + n H(+). It participates in glycan metabolism; pectin degradation; 2-dehydro-3-deoxy-D-gluconate from pectin: step 1/5. Its function is as follows. Pectinesterase may play a role in cell wall metabolism during fruit growth and development prior to ripening and may be required for preparing cell walls for softening by polygalacturonase during fruit ripening. The sequence is that of Pectinesterase 2.2 (PME2.2) from Solanum lycopersicum (Tomato).